Reading from the N-terminus, the 115-residue chain is Large ribosomal subunit protein uL22 (115 aa).

This sequence belongs to the universal ribosomal protein uL22 family. In terms of assembly, part of the 50S ribosomal subunit.

This protein binds specifically to 23S rRNA; its binding is stimulated by other ribosomal proteins, e.g. L4, L17, and L20. It is important during the early stages of 50S assembly. It makes multiple contacts with different domains of the 23S rRNA in the assembled 50S subunit and ribosome. In terms of biological role, the globular domain of the protein is located near the polypeptide exit tunnel on the outside of the subunit, while an extended beta-hairpin is found that lines the wall of the exit tunnel in the center of the 70S ribosome. This is Large ribosomal subunit protein uL22 from Endomicrobium trichonymphae.